The following is a 239-amino-acid chain: Ribonuclease HII (239 aa).

Positions 30-221 (GPVAGVDEVG…VRRVATRSNG (192 aa)) constitute an RNase H type-2 domain. A divalent metal cation contacts are provided by D36, E37, and D130. The disordered stretch occupies residues 217–239 (TRSNGAATAEREADPPQERDGTG). Residues 225–239 (AEREADPPQERDGTG) show a composition bias toward basic and acidic residues.

Belongs to the RNase HII family. Requires Mn(2+) as cofactor. Mg(2+) serves as cofactor.

The protein localises to the cytoplasm. The catalysed reaction is Endonucleolytic cleavage to 5'-phosphomonoester.. In terms of biological role, endonuclease that specifically degrades the RNA of RNA-DNA hybrids. The sequence is that of Ribonuclease HII from Mycobacterium ulcerans (strain Agy99).